The sequence spans 861 residues: Envelope glycoprotein gp160 (861 aa).

An N-terminal signal peptide occupies residues 1-32; that stretch reads MRVKEKYQHLWRWGWKWGTMLLGILMICSATE. The Extracellular portion of the chain corresponds to 33–689; it reads KLWVTVYYGV…ITNWLWYIKI (657 aa). Cysteines 54 and 74 form a disulfide. Asparagine 88, asparagine 136, asparagine 141, asparagine 146, asparagine 161, and asparagine 165 each carry an N-linked (GlcNAc...) asparagine; by host glycan. Disulfide bonds link cysteine 119/cysteine 210, cysteine 126/cysteine 201, cysteine 131/cysteine 162, cysteine 223/cysteine 252, and cysteine 233/cysteine 244. The V1 stretch occupies residues 131-161; sequence CTDLGNATNTNSSNTNSSSGEMMMEKGEIKN. The interval 162–201 is V2; the sequence is CSFNISTSIRGKVQKEYAFFYKLDIIPIDNDTTSYTLTSC. A Putative binding site to alpha-4/beta-7 integrin motif is present at residues 184-186; sequence LDI. N-linked (GlcNAc...) asparagine; by host glycans are attached at residues asparagine 191, asparagine 202, asparagine 235, asparagine 239, asparagine 246, asparagine 267, asparagine 281, asparagine 294, asparagine 300, asparagine 306, asparagine 337, asparagine 344, and asparagine 361. Positions 301–335 are V3; sequence CTRPNNNTRKSIRIQRGPGRAFVTIGKIGNMRQAH. Cysteine 301 and cysteine 336 form a disulfide bridge. The interval 369–379 is CD4-binding loop; that stretch reads SSGGDPEIVTH. Disulfide bonds link cysteine 383/cysteine 450 and cysteine 390/cysteine 423. The tract at residues 390 to 423 is V4; that stretch reads CNSTQLFNSTWFNSTWSTEGSNNTEGSDTITLPC. 6 N-linked (GlcNAc...) asparagine; by host glycosylation sites follow: asparagine 391, asparagine 397, asparagine 402, asparagine 411, asparagine 453, and asparagine 468. 2 V5 regions span residues 466-476 and 468-476; these read NNNGSEIFRPG and NGSEIFRPG. The tract at residues 517–537 is fusion peptide; it reads AVGIGALFLGFLGAAGSTMGA. The tract at residues 579–597 is immunosuppression; sequence KQLQARILAVERYLKDQQL. An intrachain disulfide couples cysteine 603 to cysteine 609. N-linked (GlcNAc...) asparagine; by host glycosylation is found at asparagine 616, asparagine 621, asparagine 630, asparagine 642, and asparagine 679. Residues 638-672 are a coiled coil; sequence REINNYTSLIHSLIEESQNQQEKNEQELLELDKWA. An MPER; binding to GalCer region spans residues 667–688; the sequence is ELDKWASLWNWFNITNWLWYIK. The chain crosses the membrane as a helical span at residues 690–710; sequence FIMIVGGLVGLRIVFAVLSIV. The Cytoplasmic portion of the chain corresponds to 711 to 861; that stretch reads NRVRQGYSPL…IRQGLERILL (151 aa). The YXXL motif; contains endocytosis signal motif lies at 717–720; the sequence is YSPL. Positions 723 to 747 are disordered; it reads QTHLPTPRGPDRPEGIEEEGGERDR. S-palmitoyl cysteine; by host attachment occurs at residues cysteine 769 and cysteine 842. Residues 860–861 carry the Di-leucine internalization motif motif; the sequence is LL.

Belongs to the HIV-1 env protein family. The mature envelope protein (Env) consists of a homotrimer of non-covalently associated gp120-gp41 heterodimers. The resulting complex protrudes from the virus surface as a spike. There seems to be as few as 10 spikes on the average virion. Interacts with host CD4, CCR5 and CXCR4. Gp120 also interacts with the C-type lectins CD209/DC-SIGN and CLEC4M/DC-SIGNR (collectively referred to as DC-SIGN(R)). Gp120 and gp41 interact with GalCer. Gp120 interacts with host ITGA4/ITGB7 complex; on CD4+ T-cells, this interaction results in rapid activation of integrin ITGAL/LFA-1, which facilitates efficient cell-to-cell spreading of HIV-1. Gp120 interacts with cell-associated heparan sulfate; this interaction increases virus infectivity on permissive cells and may be involved in infection of CD4- cells. In terms of assembly, the mature envelope protein (Env) consists of a homotrimer of non-covalently associated gp120-gp41 heterodimers. The resulting complex protrudes from the virus surface as a spike. There seems to be as few as 10 spikes on the average virion. Highly glycosylated by host. The high number of glycan on the protein is reffered to as 'glycan shield' because it contributes to hide protein sequence from adaptive immune system. Post-translationally, palmitoylation of the transmembrane protein and of Env polyprotein (prior to its proteolytic cleavage) is essential for their association with host cell membrane lipid rafts. Palmitoylation is therefore required for envelope trafficking to classical lipid rafts, but not for viral replication. In terms of processing, specific enzymatic cleavages in vivo yield mature proteins. Envelope glycoproteins are synthesized as an inactive precursor that is heavily N-glycosylated and processed likely by host cell furin in the Golgi to yield the mature SU and TM proteins. The cleavage site between SU and TM requires the minimal sequence [KR]-X-[KR]-R. About 2 of the 9 disulfide bonds of gp41 are reduced by P4HB/PDI, following binding to CD4 receptor.

The protein localises to the virion membrane. Its subcellular location is the host cell membrane. It localises to the host endosome membrane. Its function is as follows. Oligomerizes in the host endoplasmic reticulum into predominantly trimers. In a second time, gp160 transits in the host Golgi, where glycosylation is completed. The precursor is then proteolytically cleaved in the trans-Golgi and thereby activated by cellular furin or furin-like proteases to produce gp120 and gp41. In terms of biological role, attaches the virus to the host lymphoid cell by binding to the primary receptor CD4. This interaction induces a structural rearrangement creating a high affinity binding site for a chemokine coreceptor like CXCR4 and/or CCR5. Acts as a ligand for CD209/DC-SIGN and CLEC4M/DC-SIGNR, which are respectively found on dendritic cells (DCs), and on endothelial cells of liver sinusoids and lymph node sinuses. These interactions allow capture of viral particles at mucosal surfaces by these cells and subsequent transmission to permissive cells. HIV subverts the migration properties of dendritic cells to gain access to CD4+ T-cells in lymph nodes. Virus transmission to permissive T-cells occurs either in trans (without DCs infection, through viral capture and transmission), or in cis (following DCs productive infection, through the usual CD4-gp120 interaction), thereby inducing a robust infection. In trans infection, bound virions remain infectious over days and it is proposed that they are not degraded, but protected in non-lysosomal acidic organelles within the DCs close to the cell membrane thus contributing to the viral infectious potential during DCs' migration from the periphery to the lymphoid tissues. On arrival at lymphoid tissues, intact virions recycle back to DCs' cell surface allowing virus transmission to CD4+ T-cells. Acts as a class I viral fusion protein. Under the current model, the protein has at least 3 conformational states: pre-fusion native state, pre-hairpin intermediate state, and post-fusion hairpin state. During fusion of viral and target intracellular membranes, the coiled coil regions (heptad repeats) assume a trimer-of-hairpins structure, positioning the fusion peptide in close proximity to the C-terminal region of the ectodomain. The formation of this structure appears to drive apposition and subsequent fusion of viral and target cell membranes. Complete fusion occurs in host cell endosomes and is dynamin-dependent, however some lipid transfer might occur at the plasma membrane. The virus undergoes clathrin-dependent internalization long before endosomal fusion, thus minimizing the surface exposure of conserved viral epitopes during fusion and reducing the efficacy of inhibitors targeting these epitopes. Membranes fusion leads to delivery of the nucleocapsid into the cytoplasm. The sequence is that of Envelope glycoprotein gp160 from Homo sapiens (Human).